A 431-amino-acid chain; its full sequence is L-cysteine:1D-myo-inositol 2-amino-2-deoxy-alpha-D-glucopyranoside ligase (431 aa).

Cys-44 lines the Zn(2+) pocket. L-cysteinyl-5'-AMP-binding positions include 44 to 47 (CGIT), Thr-59, and 82 to 84 (NVT). A 'HIGH' region motif is present at residues 46-56 (ITPYDATHLGH). The 'ERGGDP' region signature appears at 187 to 192 (ERGGDP). An L-cysteinyl-5'-AMP-binding site is contributed by Trp-227. Residue Cys-231 coordinates Zn(2+). 249–251 (GND) serves as a coordination point for L-cysteinyl-5'-AMP. His-256 is a Zn(2+) binding site. Position 283 (Ile-283) interacts with L-cysteinyl-5'-AMP. The 'KMSKS' region signature appears at 289–293 (KMSKS).

It belongs to the class-I aminoacyl-tRNA synthetase family. MshC subfamily. Monomer. The cofactor is Zn(2+).

It carries out the reaction 1D-myo-inositol 2-amino-2-deoxy-alpha-D-glucopyranoside + L-cysteine + ATP = 1D-myo-inositol 2-(L-cysteinylamino)-2-deoxy-alpha-D-glucopyranoside + AMP + diphosphate + H(+). Catalyzes the ATP-dependent condensation of GlcN-Ins and L-cysteine to form L-Cys-GlcN-Ins. In Stackebrandtia nassauensis (strain DSM 44728 / CIP 108903 / NRRL B-16338 / NBRC 102104 / LLR-40K-21), this protein is L-cysteine:1D-myo-inositol 2-amino-2-deoxy-alpha-D-glucopyranoside ligase.